Consider the following 269-residue polypeptide: Tryptophan synthase alpha chain (269 aa).

Residues Glu-49 and Asp-60 each act as proton acceptor in the active site.

It belongs to the TrpA family. Tetramer of two alpha and two beta chains.

It carries out the reaction (1S,2R)-1-C-(indol-3-yl)glycerol 3-phosphate + L-serine = D-glyceraldehyde 3-phosphate + L-tryptophan + H2O. Its pathway is amino-acid biosynthesis; L-tryptophan biosynthesis; L-tryptophan from chorismate: step 5/5. Its function is as follows. The alpha subunit is responsible for the aldol cleavage of indoleglycerol phosphate to indole and glyceraldehyde 3-phosphate. The chain is Tryptophan synthase alpha chain from Actinobacillus pleuropneumoniae serotype 3 (strain JL03).